Reading from the N-terminus, the 260-residue chain is Coiled-coil domain-containing protein 127 (260 aa).

Residues 47-135 (ESQKEIEKAR…QIIQEKSQRQ (89 aa)) are a coiled coil.

The chain is Coiled-coil domain-containing protein 127 (Ccdc127) from Rattus norvegicus (Rat).